The following is a 492-amino-acid chain: V-type proton ATPase subunit B 1 (492 aa).

It belongs to the ATPase alpha/beta chains family. In terms of assembly, V-ATPase is a heteromultimeric enzyme composed of a peripheral catalytic V1 complex (main components: subunits A, B, C, D, E, and F) attached to an integral membrane V0 proton pore complex (main component: the proteolipid protein).

In terms of biological role, non-catalytic subunit of the peripheral V1 complex of vacuolar ATPase. V-ATPase is responsible for acidifying a variety of intracellular compartments in eukaryotic cells. The chain is V-type proton ATPase subunit B 1 from Acetabularia acetabulum (Mermaid's wine glass).